Consider the following 371-residue polypeptide: Protein-glutamate methylesterase/protein-glutamine glutaminase 3 (371 aa).

The Response regulatory domain occupies 5–120 (RVVVIDDSAY…SEEILTIRED (116 aa)). Asp-56 carries the 4-aspartylphosphate modification. The 189-residue stretch at 174-362 (PAGRLEVVAI…LDRMSREIIQ (189 aa)) folds into the CheB-type methylesterase domain. Catalysis depends on residues Ser-186, His-213, and Asp-309.

Belongs to the CheB family. Phosphorylated by CheA. Phosphorylation of the N-terminal regulatory domain activates the methylesterase activity.

The protein resides in the cytoplasm. The enzyme catalyses [protein]-L-glutamate 5-O-methyl ester + H2O = L-glutamyl-[protein] + methanol + H(+). It carries out the reaction L-glutaminyl-[protein] + H2O = L-glutamyl-[protein] + NH4(+). Functionally, involved in chemotaxis. Part of a chemotaxis signal transduction system that modulates chemotaxis in response to various stimuli. Catalyzes the demethylation of specific methylglutamate residues introduced into the chemoreceptors (methyl-accepting chemotaxis proteins or MCP) by CheR. Also mediates the irreversible deamidation of specific glutamine residues to glutamic acid. The chain is Protein-glutamate methylesterase/protein-glutamine glutaminase 3 from Geobacter sulfurreducens (strain ATCC 51573 / DSM 12127 / PCA).